Here is a 152-residue protein sequence, read N- to C-terminus: ESAT-6 secretion machinery protein EssA (152 aa).

The Cytoplasmic segment spans residues 1–114 (MLMNSVIALT…PYIQNKQEKK (114 aa)). Positions 62–83 (ERQQQIKNDMFQNQASHSTRLN) are disordered. Over residues 66–80 (QIKNDMFQNQASHST) the composition is skewed to polar residues. The chain crosses the membrane as a helical span at residues 115-135 (IFPYILMSVGAFLTLGFVIFS). At 136-152 (IHKGRRTKNESARKSNI) the chain is on the extracellular side.

This sequence belongs to the EssA family.

It localises to the cell membrane. Component of the ESAT-6 secretion system (Ess). Required for the secretion of EsxA and EsxB. This is ESAT-6 secretion machinery protein EssA from Staphylococcus aureus (strain COL).